The chain runs to 845 residues: MDIRKEFLDFFASKGHEIIASAPLVPDDASLLFTNAGMVPFKNIFTGAVPRPTPPIRTSCQTCIRAGGKHNDLDNVGYTARHHTFFEMLGNFSFGEYFKENAIAYAWEFITEILKLDKDKLYVTVHEKDDEAFEIWAKHIAKERIYRFGDHDNFWAMGDTGPCGPCSEIFYDQGEEYFHGKEDYMGGDGDRFLEIWNLVFMQFERDKAGNLSPLPKPSIDTGMGLERVTAIKEGVFSNYDSSIFMPLIHAVEKLCGKPYKYESGASYRVIADHIRSITFLIAQGVNFDKEGRGYVLRRILRRALRHGYLLGLKEPFMYKLVDNVCELMGHHYSYLLEKKETIKEIIKLEEERFLSTISAGLELFKAQLANTKDVFSGEIAFKLYDTYGFPLDLTADMLREIGKKVDEKKFDELMNEQKARAKASWKGSGDKIKEKGDFKALLEKFGENKFIGYETMKSQSKILAILNNDFRNVDELKAGNIGWIMLDETPFYAQSGGQIYDTGLINGSNKVTDTQKFFGLNLSEVETSTNLKVGDIVKCEVDEARIETARHHSATHLLHLALREILGSGVGQAGSSVDSERLRFDFTYPKSLTSEQLLKIENNVNSQISKGGASKTEIMDINEAIKSGAIAMFSEKYGDKVRVLTLGESKEFCGGTHVRNLWEIGSFYIVKESGVSAGVRRIEAVCSKAAINYAKNFRSEFSEVQNALKSNEALSAIKKLKDEIKSLKNEISKASAAKVIDLDEKNGIKFVVSEFDGDIKTKIDELKNENDKIVAVFFKVEDGRVQIAAGVKNAPLKAGEIVKQIAKILGGGGGGRDDFATAGGKDMTKIDEAVNFARDLIKAKI.

His552, His556, Cys653, and His657 together coordinate Zn(2+).

Belongs to the class-II aminoacyl-tRNA synthetase family. Zn(2+) serves as cofactor.

It is found in the cytoplasm. It carries out the reaction tRNA(Ala) + L-alanine + ATP = L-alanyl-tRNA(Ala) + AMP + diphosphate. Its function is as follows. Catalyzes the attachment of alanine to tRNA(Ala) in a two-step reaction: alanine is first activated by ATP to form Ala-AMP and then transferred to the acceptor end of tRNA(Ala). Also edits incorrectly charged Ser-tRNA(Ala) and Gly-tRNA(Ala) via its editing domain. The polypeptide is Alanine--tRNA ligase (Campylobacter hominis (strain ATCC BAA-381 / DSM 21671 / CCUG 45161 / LMG 19568 / NCTC 13146 / CH001A)).